A 704-amino-acid chain; its full sequence is DNA-binding protein RFX2 (704 aa).

The tract at residues 1–39 (MQNSEGGADSPASVALRPSAAAPPVPASPQRVLVQAASS) is disordered. Residues 10–20 (SPASVALRPSA) are compositionally biased toward low complexity. Position 28 is a phosphoserine (S28). Positions 199–274 (HLQWLLDNYE…YHYYGIRLKP (76 aa)) form a DNA-binding region, RFX-type winged-helix. The interval 292–334 (QQPMHQKPRYRPAQKTDSLGDSSSHSGLHSTPEQTTAAQNQHH) is disordered. The span at 307-334 (TDSLGDSSSHSGLHSTPEQTTAAQNQHH) shows a compositional bias: low complexity. S416 is subject to Phosphoserine.

Belongs to the RFX family. Homodimer; probably only forms homodimers in testis. Heterodimer; heterodimerizes with RFX1 and RFX3.

It is found in the nucleus. The protein resides in the cytoplasm. Its function is as follows. Transcription factor that acts as a key regulator of spermatogenesis. Acts by regulating expression of genes required for the haploid phase during spermiogenesis, such as genes required for cilium assembly and function. Recognizes and binds the X-box, a regulatory motif with DNA sequence 5'-GTNRCC(0-3N)RGYAAC-3' present on promoters. Probably activates transcription of the testis-specific histone gene H1-6. The sequence is that of DNA-binding protein RFX2 (RFX2) from Pongo abelii (Sumatran orangutan).